We begin with the raw amino-acid sequence, 252 residues long: Ubiquinone biosynthesis O-methyltransferase (252 aa).

S-adenosyl-L-methionine contacts are provided by Arg51, Gly70, Asp91, and Met136.

Belongs to the methyltransferase superfamily. UbiG/COQ3 family.

It carries out the reaction a 3-demethylubiquinol + S-adenosyl-L-methionine = a ubiquinol + S-adenosyl-L-homocysteine + H(+). The catalysed reaction is a 3-(all-trans-polyprenyl)benzene-1,2-diol + S-adenosyl-L-methionine = a 2-methoxy-6-(all-trans-polyprenyl)phenol + S-adenosyl-L-homocysteine + H(+). Its pathway is cofactor biosynthesis; ubiquinone biosynthesis. Its function is as follows. O-methyltransferase that catalyzes the 2 O-methylation steps in the ubiquinone biosynthetic pathway. This is Ubiquinone biosynthesis O-methyltransferase from Albidiferax ferrireducens (strain ATCC BAA-621 / DSM 15236 / T118) (Rhodoferax ferrireducens).